The chain runs to 391 residues: MEPLRVLELYSGIGGMHHALRESRVPAHVVAAIDVSTVANEVYKHNFPHTHLLAKTIEGISLEEFDKLSFNMILMSPPCQPFTRIGLQGDMSDRRTNSFLYILDILPRLQKLPKYILLENVKGFEVSSTRGLLIQTMEACGFQYQEFLLSPSSLGIPNSRLRYFLIAKLQSEPLCFQAPGQILMEFPNSGTVQPQEYAVVEEGKLRVRTREPDVCLDSSSTQCSGQDSILFKHETAADIDRKRQQDSDLSVQMLKGFLEDGDTAQYLLPAKSLLRYALLLDIVKPTSRRSMCFTKGYGSYIEGTGSVLQTAEDVQIENIYKSLPDLPPEEKIAKLSMLKLRYFTPKEIANLLGFPPEFGFPEKTTVKQRYRLLGNSLNVHVVSKLLTVLCE.

Residues 4 to 391 enclose the SAM-dependent MTase C5-type domain; it reads LRVLELYSGI…VSKLLTVLCE (388 aa). Residues 13–15, D34, 57–58, and S76 each bind S-adenosyl-L-methionine; these read IGG and IE. C79 is a catalytic residue. S376 contributes to the S-adenosyl-L-methionine binding site.

Belongs to the class I-like SAM-binding methyltransferase superfamily. C5-methyltransferase family.

The protein localises to the cytoplasm. The catalysed reaction is cytidine(38) in tRNA + S-adenosyl-L-methionine = 5-methylcytidine(38) in tRNA + S-adenosyl-L-homocysteine + H(+). Specifically methylates cytosine 38 in the anticodon loop of tRNA(Asp). Has higher activity on tRNA(Asp) modified with queuosine at position 34. This is tRNA (cytosine(38)-C(5))-methyltransferase (Trdmt1) from Rattus norvegicus (Rat).